A 74-amino-acid polypeptide reads, in one-letter code: Antitoxin VapB39 (74 aa).

Its function is as follows. Antitoxin component of a type II toxin-antitoxin (TA) system. In Mycobacterium tuberculosis (strain CDC 1551 / Oshkosh), this protein is Antitoxin VapB39 (vapB39).